The following is a 220-amino-acid chain: Metalloproteinase inhibitor 2 (220 aa).

The N-terminal stretch at 1–26 is a signal peptide; sequence MPGAALPSLLAWLAVLLLGRARPADA. Position 27 (Cys-27) interacts with Zn(2+). Involved in metalloproteinase-binding stretches follow at residues 27–30 and 95–96; these read CSCS and TE. Cystine bridges form between Cys-27/Cys-98, Cys-29/Cys-127, Cys-39/Cys-152, Cys-154/Cys-201, Cys-159/Cys-164, and Cys-172/Cys-193. Residues 27-152 enclose the NTR domain; sequence CSCSPIHPQQ…SLNQRYQMGC (126 aa).

It belongs to the protease inhibitor I35 (TIMP) family. In terms of processing, the activity of TIMP2 is dependent on the presence of disulfide bonds.

It is found in the secreted. Functionally, complexes with metalloproteinases (such as collagenases) and irreversibly inactivates them by binding to their catalytic zinc cofactor. This chain is Metalloproteinase inhibitor 2 (TIMP2), found in Gallus gallus (Chicken).